The sequence spans 111 residues: Transcription and mRNA export factor SUS1 (111 aa).

It belongs to the ENY2 family. As to quaternary structure, component of the nuclear pore complex (NPC)-associated TREX-2 complex (transcription and export complex 2), composed of at least SUS1, SAC3, THP1, SEM1, and CDC31. TREX-2 contains 2 SUS1 chains. The TREX-2 complex interacts with the nucleoporin NUP1. Component of the 1.8 MDa SAGA transcription coactivator-HAT complex. SAGA is built of 5 distinct domains with specialized functions. Within the SAGA complex, SUS1, SGF11, SGF73 and UBP8 form an additional subcomplex of SAGA called the DUB module (deubiquitination module). Interacts directly with THP1, SAC3, SGF11, and with the RNA polymerase II.

The protein localises to the nucleus. The protein resides in the nucleoplasm. It is found in the cytoplasm. Its subcellular location is the P-body. In terms of biological role, involved in mRNA export coupled transcription activation by association with both the TREX-2 and the SAGA complexes. At the promoters, SAGA is required for recruitment of the basal transcription machinery. It influences RNA polymerase II transcriptional activity through different activities such as TBP interaction and promoter selectivity, interaction with transcription activators, and chromatin modification through histone acetylation and deubiquitination. Within the SAGA complex, participates in a subcomplex required for deubiquitination of H2B and for the maintenance of steady-state H3 methylation levels. The TREX-2 complex functions in docking export-competent ribonucleoprotein particles (mRNPs) to the nuclear entrance of the nuclear pore complex (nuclear basket). TREX-2 participates in mRNA export and accurate chromatin positioning in the nucleus by tethering genes to the nuclear periphery. May also be involved in cytoplasmic mRNA decay by interaction with components of P-bodies. The sequence is that of Transcription and mRNA export factor SUS1 from Lodderomyces elongisporus (strain ATCC 11503 / CBS 2605 / JCM 1781 / NBRC 1676 / NRRL YB-4239) (Yeast).